The following is a 399-amino-acid chain: Tryptophan synthase beta chain (399 aa).

Lysine 92 carries the N6-(pyridoxal phosphate)lysine modification.

This sequence belongs to the TrpB family. In terms of assembly, tetramer of two alpha and two beta chains. The cofactor is pyridoxal 5'-phosphate.

It carries out the reaction (1S,2R)-1-C-(indol-3-yl)glycerol 3-phosphate + L-serine = D-glyceraldehyde 3-phosphate + L-tryptophan + H2O. It functions in the pathway amino-acid biosynthesis; L-tryptophan biosynthesis; L-tryptophan from chorismate: step 5/5. Functionally, the beta subunit is responsible for the synthesis of L-tryptophan from indole and L-serine. This is Tryptophan synthase beta chain from Bordetella pertussis (strain Tohama I / ATCC BAA-589 / NCTC 13251).